The sequence spans 348 residues: MDNITWMASHTGWSDFILMGLFRQSKHPMANITWMANHTGWSDFILLGLFRQSKHPALLCVVIFVVFLMALSGNAVLILLIHCDAHLHTPMYFFISQLSLMDMAYISVTVPKMLLDQVMGVNKISAPECGMQMFFYVTLAGSEFFLLATMAYDRYVAICHPLRYPVLMNHRVCLFLSSGCWFLGSVDGFTFTPITMTFPFRGSREIHHFFCEVPAVLNLSCSDTSLYEIFMYLCCVLMLLIPVVIISSSYLLILLTIHGMNSAEGRKKAFATCSSHLTVVILFYGAAIYTYMLPSSYHTPEKDMMVSVFYTILTPVVNPLIYSLRNKDVMGALKKMLTVEPAFQKAME.

The Extracellular segment spans residues 1–57 (MDNITWMASHTGWSDFILMGLFRQSKHPMANITWMANHTGWSDFILLGLFRQSKHPA). 2 N-linked (GlcNAc...) asparagine glycosylation sites follow: asparagine 31 and asparagine 37. The chain crosses the membrane as a helical span at residues 58–81 (LLCVVIFVVFLMALSGNAVLILLI). Residues 82–89 (HCDAHLHT) are Cytoplasmic-facing. A helical transmembrane segment spans residues 90 to 111 (PMYFFISQLSLMDMAYISVTVP). The Extracellular portion of the chain corresponds to 112–132 (KMLLDQVMGVNKISAPECGMQ). Cysteine 129 and cysteine 221 are oxidised to a cystine. A helical membrane pass occupies residues 133 to 152 (MFFYVTLAGSEFFLLATMAY). Residues 153–171 (DRYVAICHPLRYPVLMNHR) are Cytoplasmic-facing. Residues 172-190 (VCLFLSSGCWFLGSVDGFT) form a helical membrane-spanning segment. The Extracellular portion of the chain corresponds to 191-227 (FTPITMTFPFRGSREIHHFFCEVPAVLNLSCSDTSLY). A glycan (N-linked (GlcNAc...) asparagine) is linked at asparagine 218. The helical transmembrane segment at 228-251 (EIFMYLCCVLMLLIPVVIISSSYL) threads the bilayer. Residues 252–268 (LILLTIHGMNSAEGRKK) lie on the Cytoplasmic side of the membrane. Residues 269 to 291 (AFATCSSHLTVVILFYGAAIYTY) traverse the membrane as a helical segment. Topologically, residues 292–304 (MLPSSYHTPEKDM) are extracellular. Residues 305-324 (MVSVFYTILTPVVNPLIYSL) form a helical membrane-spanning segment. Topologically, residues 325–348 (RNKDVMGALKKMLTVEPAFQKAME) are cytoplasmic.

This sequence belongs to the G-protein coupled receptor 1 family.

It localises to the cell membrane. In terms of biological role, odorant receptor. The sequence is that of Olfactory receptor 2T4 (OR2T4) from Homo sapiens (Human).